Here is a 714-residue protein sequence, read N- to C-terminus: Fatty acid oxidation complex subunit alpha (714 aa).

Positions 1 to 190 (MEMASAFTLN…KLGLVDDVVP (190 aa)) are enoyl-CoA hydratase. The segment at 306–714 (APLNSVGILG…FWKTTATDLQ (409 aa)) is 3-hydroxyacyl-CoA dehydrogenase.

It in the N-terminal section; belongs to the enoyl-CoA hydratase/isomerase family. The protein in the central section; belongs to the 3-hydroxyacyl-CoA dehydrogenase family. Heterotetramer of two alpha chains (FadJ) and two beta chains (FadI).

The protein resides in the cytoplasm. It catalyses the reaction a (3S)-3-hydroxyacyl-CoA = a (2E)-enoyl-CoA + H2O. The enzyme catalyses a 4-saturated-(3S)-3-hydroxyacyl-CoA = a (3E)-enoyl-CoA + H2O. The catalysed reaction is a (3S)-3-hydroxyacyl-CoA + NAD(+) = a 3-oxoacyl-CoA + NADH + H(+). It carries out the reaction (3S)-3-hydroxybutanoyl-CoA = (3R)-3-hydroxybutanoyl-CoA. It functions in the pathway lipid metabolism; fatty acid beta-oxidation. In terms of biological role, catalyzes the formation of a hydroxyacyl-CoA by addition of water on enoyl-CoA. Also exhibits 3-hydroxyacyl-CoA epimerase and 3-hydroxyacyl-CoA dehydrogenase activities. The polypeptide is Fatty acid oxidation complex subunit alpha (Escherichia coli (strain SMS-3-5 / SECEC)).